Consider the following 59-residue polypeptide: Potassium channel toxin alpha-KTx 1.12 (59 aa).

An N-terminal signal peptide occupies residues 1–22; sequence MKILSVLLLALIICSIVGWSEA. Position 23 is a pyrrolidone carboxylic acid (Q23). Intrachain disulfides connect C29-C50, C35-C55, and C39-C57. Positions 48–55 are interaction with Ca(2+)-activated K(+) channels; that stretch reads GKCMNKKC.

The protein belongs to the short scorpion toxin superfamily. Potassium channel inhibitor family. Alpha-KTx 01 subfamily. In terms of tissue distribution, expressed by the venom gland.

It localises to the secreted. In terms of biological role, potent selective inhibitor of high conductance (maxi-K), different medium and small conductance calcium-activated potassium channels (KCa1.1/KCNMA1 and others), as well as a voltage-dependent potassium channel (Kv1.3/KCNA3&gt;Kv1.2/KCNA2&gt;Kv1.6/KCNA3&gt;&gt;Shaker/Sh). It blocks channel activity by a simple bimolecular inhibition process. Has a pH-specific antimicrobial activity against bacteria (B.subtilis, E.coli and S.aureus) and the fungus C.albicans. The sequence is that of Potassium channel toxin alpha-KTx 1.12 from Leiurus hebraeus (Hebrew deathstalker scorpion).